Reading from the N-terminus, the 104-residue chain is N(4)-acetylcytidine amidohydrolase (104 aa).

The ASCH domain maps to 7–95 (MTFFERFETD…IQDIYPGISQ (89 aa)). Lys22 functions as the Proton acceptor in the catalytic mechanism. Thr25 serves as the catalytic Nucleophile. The active-site Proton donor is the Glu75.

This sequence belongs to the N(4)-acetylcytidine amidohydrolase family.

It catalyses the reaction N(4)-acetylcytidine + H2O = cytidine + acetate + H(+). The enzyme catalyses N(4)-acetyl-2'-deoxycytidine + H2O = 2'-deoxycytidine + acetate + H(+). It carries out the reaction N(4)-acetylcytosine + H2O = cytosine + acetate + H(+). Functionally, catalyzes the hydrolysis of N(4)-acetylcytidine (ac4C). The chain is N(4)-acetylcytidine amidohydrolase from Vibrio atlanticus (strain LGP32) (Vibrio splendidus (strain Mel32)).